Consider the following 1789-residue polypeptide: Protein sprint (1789 aa).

Disordered stretches follow at residues 53 to 120 (TTAN…AHPP), 140 to 190 (TTTA…DLAN), 218 to 237 (PLWN…HPTG), 261 to 317 (QRMH…QAGL), 329 to 378 (LNNN…DADD), and 401 to 460 (RRSR…PCDL). Residues 82–114 (SINNNKNNNISNKNNNNNNNNNNNINNNNNNNN) are compositionally biased toward low complexity. Over residues 140–149 (TTTANQLQQQ) the composition is skewed to polar residues. Positions 176–185 (PSEEDGDTDA) are enriched in acidic residues. The span at 223–233 (RNGNGSTTTHC) shows a compositional bias: polar residues. A compositionally biased stretch (low complexity) spans 295 to 317 (NNNNINNNHNGQQSQKSQQQAGL). The span at 337–361 (QPGSMTPASNRTGLDSNQNQKQNLN) shows a compositional bias: polar residues. Residues 409–418 (QSRTSLVSSS) show a composition bias toward low complexity. Acidic residues predominate over residues 428–445 (TSSEDDEEEPVEAEDEGE). The SH2 domain maps to 473-566 (WFLPGIQRSG…ELPVQLMLPR (94 aa)). Disordered regions lie at residues 632-689 (FFSD…SGGQ), 744-787 (TAPE…SANG), 852-918 (GECK…ILES), 969-1006 (DLLA…QSLL), 1040-1067 (AAED…QGSP), 1094-1123 (RSQM…MLQP), and 1138-1160 (PKPK…KRAR). Residues 639–649 (KPPPTGAPPLP) show a composition bias toward pro residues. Residues 671 to 686 (TPSDTTNSSLSSFTTS) are compositionally biased toward low complexity. A compositionally biased stretch (polar residues) spans 857-868 (TLSSQGSSSNDS). Residues 903-914 (AGKESQHYKESD) are compositionally biased toward basic and acidic residues. Positions 974–984 (TPSTPTPTQQS) are enriched in low complexity. 2 stretches are compositionally biased toward polar residues: residues 994–1006 (TATP…QSLL) and 1048–1065 (TTPT…SKQG). Low complexity predominate over residues 1143–1154 (SQQQQQSQQQQQ). The 143-residue stretch at 1531–1673 (RSEDIQLLAQ…LKTFMASEGE (143 aa)) folds into the VPS9 domain. Positions 1689 to 1777 (CSSVLRVIIP…CMLAYKRIDA (89 aa)) constitute a Ras-associating domain.

This sequence belongs to the RIN (Ras interaction/interference) family. As to expression, in late cellular blastoderm embryos, it is expressed in the posterior end. Then, as development proceeds, it is expressed in the developing midgut, amnioserosa and in a specific subset of CNS neurons. Isoform 1 is expressed earlier in developing midgut and amnioserosa, but is not expressed in the CNS.

Functionally, potential Ras effector protein. May function as a guanine nucleotide exchange (GEF), by exchanging bound GDP for free GTP. This is Protein sprint (spri) from Drosophila melanogaster (Fruit fly).